We begin with the raw amino-acid sequence, 777 residues long: MLTNLRIFAMSHQTIPSVCINNICCYKIRASLKRLKPHVPLGRNCSSLPGLIGNDIKSLHSIINPPIAKIRNIGIMAHIDAGKTTTTERILYYSGYTRSLGDVDDGDTVTDFMAQERERGITIQSAAVTFDWKGYRVNLIDTPGHVDFTLEVERCLRVLDGAVAVFDASAGVEAQTLTVWRQADKHNIPRICFLNKMDKTGASFKYAVESIREKLKAKPLLLQLPIGEAKTFKGVVDVVTKEKLLWNCNSNDGKDFERKPLLEMNDPELLKETTEARNALIEQVADLDDEFADLVLEEFSENFDLLPAEKLQTAIHRVTLAQTAVPVLCGSALKNKGIQPLLDAVTMYLPSPEECNCEFLQWYKDDLCALAFKVLHDKQRGPLVFMRIYSGTIKPQLAIHNINGNCTERISRLLLPFADQHVEIPSLTAGNIALTVGLKHTATGDTIVSSKSSALAAARRAEREGEKKHRQNSEAERLVLAGVEIPEPVFFCTIEPPSVSKQPDLEHALKCLQREDPSLKVRLDPDSGQTVLCGMGELHIEIIHDRIKREYGLEAYLGPLQVAYRETILNSVRATDTLDRTLGDKRHLVTVEVEARPTETTSVMPVIEYAESIHEGLLKVSQEAIENGIYSACLQGPLLGSPIQDVAITLHSLTIHPGTSTTMISACVSRCVQKALKKADKQVLEPLMNLEVTVARDYLSPVLADLAQRRGNIQEIQTRQDNKVVIGFVPLAEIMGYSTVLRTLTSGSATFALELSTNQAMNPQDQNTLLNRRSGLT.

The 286-residue stretch at 68–353 (AKIRNIGIMA…AVTMYLPSPE (286 aa)) folds into the tr-type G domain. GTP contacts are provided by residues 77–84 (AHIDAGKT), 141–145 (DTPGH), and 195–198 (NKMD).

Belongs to the TRAFAC class translation factor GTPase superfamily. Classic translation factor GTPase family. EF-G/EF-2 subfamily.

The protein resides in the mitochondrion. It catalyses the reaction GTP + H2O = GDP + phosphate + H(+). Mitochondrial GTPase that mediates the disassembly of ribosomes from messenger RNA at the termination of mitochondrial protein biosynthesis. Acts in collaboration with MRRF. GTP hydrolysis follows the ribosome disassembly and probably occurs on the ribosome large subunit. Not involved in the GTP-dependent ribosomal translocation step during translation elongation. This chain is Ribosome-releasing factor 2, mitochondrial, found in Pongo abelii (Sumatran orangutan).